The following is a 642-amino-acid chain: LIM domain kinase 2 (642 aa).

2 LIM zinc-binding domains span residues 12–63 and 72–124; these read CLGC…CHKD and CHGC…CGKC. Positions 152–239 constitute a PDZ domain; that stretch reads LISMPAATDG…TLQLLIEHDP (88 aa). The disordered stretch occupies residues 282–304; the sequence is RSLRRSNSISKSPGPSSPKEPLL. The segment covering 286–304 has biased composition (low complexity); that stretch reads RSNSISKSPGPSSPKEPLL. One can recognise a Protein kinase domain in the interval 331-608; the sequence is LIHGEVLGKG…DSFEALSLYL (278 aa). ATP is bound by residues 337 to 345 and Lys-360; that span reads LGKGFFGQA. Asp-451 is an active-site residue. Thr-505 carries the post-translational modification Phosphothreonine.

The protein belongs to the protein kinase superfamily. TKL Ser/Thr protein kinase family. In terms of assembly, binds ROCK1 and LKAP. Expressed predominantly in the lung, and faintly in the kidney, liver, brain, spleen, gizzard, and intestine.

The protein resides in the cytoplasm. It localises to the cytoskeleton. The protein localises to the spindle. Its subcellular location is the microtubule organizing center. It is found in the centrosome. The enzyme catalyses L-seryl-[protein] + ATP = O-phospho-L-seryl-[protein] + ADP + H(+). It carries out the reaction L-threonyl-[protein] + ATP = O-phospho-L-threonyl-[protein] + ADP + H(+). Serine/threonine-protein kinase that plays an essential role in the regulation of actin filament dynamics. Acts downstream of several Rho family GTPase signal transduction pathways. Involved in astral microtubule organization and mitotic spindle orientation during early stages of mitosis by mediating phosphorylation of TPPP. This chain is LIM domain kinase 2 (LIMK2), found in Gallus gallus (Chicken).